An 89-amino-acid chain; its full sequence is uncharacterized protein (89 aa).

The interval 66–89 (RIKEQSSSSSATRTTQEPSLHLPD) is disordered.

This is an uncharacterized protein from Cestrum parqui (CmYLCV).